The sequence spans 843 residues: RNA-binding protein 25 (843 aa).

Residues 1–30 form a disordered region; the sequence is MSFPPHLNRPPMGIPALPPGIPPPQFPGFP. Positions 12-30 are enriched in pro residues; sequence MGIPALPPGIPPPQFPGFP. The region spanning 87–164 is the RRM domain; the sequence is TTVFVGNISE…KKLLVKVDAK (78 aa). N6-acetyllysine is present on Lys-135. Disordered stretches follow at residues 171 to 202 and 219 to 243; these read EWKA…ETKR and SSEL…KKED. Phosphoserine is present on residues Ser-226 and Ser-229. Glycyl lysine isopeptide (Lys-Gly) (interchain with G-Cter in SUMO2) cross-links involve residues Lys-261, Lys-273, and Lys-430. Composition is skewed to basic and acidic residues over residues 280–433 and 521–573; these read EISK…KRDR and RLRD…ERRR. 2 disordered regions span residues 280-442 and 498-688; these read EISK…DAYE and EFLE…KRKK. Residues 285–644 are necessary for nuclear speckle localization; that stretch reads RDTHKKLEEE…PNTPGDESPC (360 aa). A Glycyl lysine isopeptide (Lys-Gly) (interchain with G-Cter in SUMO2) cross-link involves residue Lys-578. Ser-583 bears the Phosphoserine mark. Residues 590–599 are compositionally biased toward basic and acidic residues; the sequence is KQEKEEKREE. A compositionally biased stretch (low complexity) spans 621–630; sequence SSAPSVSSAS. Lys-671 participates in a covalent cross-link: Glycyl lysine isopeptide (Lys-Gly) (interchain with G-Cter in SUMO2). Positions 674–683 are enriched in polar residues; that stretch reads ASNSPGQPNS. Phosphoserine occurs at positions 677 and 683. Glycyl lysine isopeptide (Lys-Gly) (interchain with G-Cter in SUMO2) cross-links involve residues Lys-688 and Lys-697. Ser-703 is modified (phosphoserine). A Glycyl lysine isopeptide (Lys-Gly) (interchain with G-Cter in SUMO2) cross-link involves residue Lys-722. A PWI domain is found at 750–843; the sequence is PELFAYPLDW…TEAKKIGLVK (94 aa).

In terms of assembly, interacts with LUC7L3 and SRRM1. Specifically associates with functional splicing complexes, including Sm proteins and U1, U2, U4, U5 and U6 snRNAs. Associates with exon junction complex (EJC) proteins, including APEX1, DDX39B, NCBP1, RBM8A and RNPS1. Interaction with NCBP1 is RNA-dependent. Post-translationally, sumoylated.

Its subcellular location is the nucleus speckle. The protein localises to the cytoplasm. RNA-binding protein that acts as a regulator of alternative pre-mRNA splicing. Involved in apoptotic cell death through the regulation of the apoptotic factor BCL2L1 isoform expression. Modulates the ratio of proapoptotic BCL2L1 isoform S to antiapoptotic BCL2L1 isoform L mRNA expression. When overexpressed, stimulates proapoptotic BCL2L1 isoform S 5'-splice site (5'-ss) selection, whereas its depletion caused the accumulation of antiapoptotic BCL2L1 isoform L. Promotes BCL2L1 isoform S 5'-ss usage through the 5'-CGGGCA-3' RNA sequence. Its association with LUC7L3 promotes U1 snRNP binding to a weak 5' ss in a 5'-CGGGCA-3'-dependent manner. Binds to the exonic splicing enhancer 5'-CGGGCA-3' RNA sequence located within exon 2 of the BCL2L1 pre-mRNA. Also involved in the generation of an abnormal and truncated splice form of SCN5A in heart failure. The sequence is that of RNA-binding protein 25 (RBM25) from Homo sapiens (Human).